A 329-amino-acid polypeptide reads, in one-letter code: Malate dehydrogenase (329 aa).

12-18 (GAAGQIC) provides a ligand contact to NAD(+). Substrate-binding residues include arginine 95 and arginine 101. NAD(+) is bound by residues asparagine 108, glutamine 115, and 132-134 (VGN). Substrate-binding residues include asparagine 134 and arginine 165. Histidine 190 acts as the Proton acceptor in catalysis.

The protein belongs to the LDH/MDH superfamily. MDH type 2 family. As to quaternary structure, homodimer.

It carries out the reaction (S)-malate + NAD(+) = oxaloacetate + NADH + H(+). Catalyzes the reversible oxidation of malate to oxaloacetate. The sequence is that of Malate dehydrogenase from Aquaspirillum arcticum.